The chain runs to 334 residues: MRIEEFDYELPEELIAKYPAVPRHSARLMVLNRKDQSIKHDTFINLPDYLEEGDLLVFNNTKVIPARLYGRKPTGGRVEVVLTDFIKPDEWKALIGGKKIRPGLVIEVAPDFKVEVLEHIEEGKFRVKLLGEEPLKLIDKYGHIPIPPYLKREEEPIDRVYYQTIFAKEKGAVASPTASLHFSEELLEKLKEKGINFAFITLHVSYGTFKPVKVERVEEHRVDPEYVKIPKETVEKIKETKEKGKRVVAVGTTVVRALETKPFEPFEGWTDLYIYPGFKFKVVDAMITNFHLPRSSLLILVSAFAGREFILKAYREAVEKRYRFYSYGDGMLIL.

It belongs to the QueA family. In terms of assembly, monomer.

It localises to the cytoplasm. The catalysed reaction is 7-aminomethyl-7-carbaguanosine(34) in tRNA + S-adenosyl-L-methionine = epoxyqueuosine(34) in tRNA + adenine + L-methionine + 2 H(+). It participates in tRNA modification; tRNA-queuosine biosynthesis. Its function is as follows. Transfers and isomerizes the ribose moiety from AdoMet to the 7-aminomethyl group of 7-deazaguanine (preQ1-tRNA) to give epoxyqueuosine (oQ-tRNA). The sequence is that of S-adenosylmethionine:tRNA ribosyltransferase-isomerase from Aquifex aeolicus (strain VF5).